We begin with the raw amino-acid sequence, 386 residues long: MLNPHGGKLINKIATEEERKDLTEKAKTLKKIVIADRYVSDCEMIANGGFSPLDGFMTKEDAESVINDIQLKNGLLWAIPIVLPVGEDVFNQIKIGDEVALYDRHNRPIAIMVVEDKYTLDLENYCKNVFKTTDIEHPGVKVVKSAGNKFIGGEIIRLLNRPVREGIDEKYYLDPAQVRENIKNKGWKKIVAFQTRNPIHRAHEYIIKVALEPMDGVMIHPLVGETKPDDIPADVRMKCYEVLIDNYFNREKVHLSVLPASMHYAGPREAIHHMLMRKNYGATHMIIGRDHAGVGDYYGTYEAQEFVEQFVDQLEIQPLKFEHSFYCTKCENMASFKTCPHPKEDHIHLSGTKVRAMLREGKRPPKEFSRPEVADILIKWATGKNG.

This sequence belongs to the sulfate adenylyltransferase family.

It catalyses the reaction sulfate + ATP + H(+) = adenosine 5'-phosphosulfate + diphosphate. The protein operates within sulfur metabolism; hydrogen sulfide biosynthesis; sulfite from sulfate: step 1/3. In Persephonella marina (strain DSM 14350 / EX-H1), this protein is Sulfate adenylyltransferase.